Reading from the N-terminus, the 359-residue chain is 3-dehydroquinate synthase (359 aa).

Residues 71-76, 105-109, 129-130, Lys142, and Lys151 contribute to the NAD(+) site; these read DGEAYK, GVVGD, and TT. The Zn(2+) site is built by Glu184, His247, and His264.

Belongs to the sugar phosphate cyclases superfamily. Dehydroquinate synthase family. The cofactor is Co(2+). Zn(2+) is required as a cofactor. NAD(+) serves as cofactor.

Its subcellular location is the cytoplasm. It carries out the reaction 7-phospho-2-dehydro-3-deoxy-D-arabino-heptonate = 3-dehydroquinate + phosphate. It participates in metabolic intermediate biosynthesis; chorismate biosynthesis; chorismate from D-erythrose 4-phosphate and phosphoenolpyruvate: step 2/7. Functionally, catalyzes the conversion of 3-deoxy-D-arabino-heptulosonate 7-phosphate (DAHP) to dehydroquinate (DHQ). This Burkholderia cenocepacia (strain HI2424) protein is 3-dehydroquinate synthase.